The primary structure comprises 274 residues: Large ribosomal subunit protein uL2 (274 aa).

Positions 223–264 are disordered; that stretch reads VAMNPVDHPHGGGEGRTSGGRHPVSPWGVPTKGYKTRSNKRT.

It belongs to the universal ribosomal protein uL2 family. In terms of assembly, part of the 50S ribosomal subunit. Forms a bridge to the 30S subunit in the 70S ribosome.

Functionally, one of the primary rRNA binding proteins. Required for association of the 30S and 50S subunits to form the 70S ribosome, for tRNA binding and peptide bond formation. It has been suggested to have peptidyltransferase activity; this is somewhat controversial. Makes several contacts with the 16S rRNA in the 70S ribosome. This is Large ribosomal subunit protein uL2 from Shewanella denitrificans (strain OS217 / ATCC BAA-1090 / DSM 15013).